The sequence spans 336 residues: D-alanine--D-alanine ligase (336 aa).

The region spanning 124-330 (KMWFSALGIP…FATFLEQAIL (207 aa)) is the ATP-grasp domain. 154 to 209 (AFDEWGSVFIKAASQGSSVGCFPAHRREDIPGLVRKAFEYAPFVVVEKTIKARELE) serves as a coordination point for ATP. Residues D284, E297, and N299 each contribute to the Mg(2+) site.

This sequence belongs to the D-alanine--D-alanine ligase family. Mg(2+) is required as a cofactor. The cofactor is Mn(2+).

The protein resides in the cytoplasm. The enzyme catalyses 2 D-alanine + ATP = D-alanyl-D-alanine + ADP + phosphate + H(+). Its pathway is cell wall biogenesis; peptidoglycan biosynthesis. Cell wall formation. This chain is D-alanine--D-alanine ligase, found in Shewanella amazonensis (strain ATCC BAA-1098 / SB2B).